Reading from the N-terminus, the 902-residue chain is Auxin response factor 5 (902 aa).

Residues 158 to 260 (FCKTLTASDT…QLMVGVRRAN (103 aa)) constitute a DNA-binding region (TF-B3). Positions 497–543 (SEMVQPQNKLTVNPSASNTSGQEQNLSQSMSAPAKPENSTLSGCSSG) are disordered. The region spanning 793 to 877 (RTYTKVQKTG…RCIRILSPTE (85 aa)) is the PB1 domain.

It belongs to the ARF family. As to quaternary structure, homodimers and heterodimers. Interacts with BRX and the auxin-responsive proteins IAA1, IAA12 (BODENLOS), IAA17 and ARF7. In terms of tissue distribution, expressed in the whole plant with a lower expression in leaves. Detected in embryo axis, provascular tissues, procambium and some differentiated vascular regions of mature organs.

The protein resides in the nucleus. Its function is as follows. Auxin response factors (ARFs) are transcriptional factors that bind specifically to the DNA sequence 5'-TGTCTC-3' found in the auxin-responsive promoter elements (AuxREs). Seems to act as transcriptional activator. Formation of heterodimers with Aux/IAA proteins may alter their ability to modulate early auxin response genes expression. Mediates embryo axis formation and vascular tissues differentiation. Functionally redundant with ARF7. May be necessary to counteract AMP1 activity. The polypeptide is Auxin response factor 5 (ARF5) (Arabidopsis thaliana (Mouse-ear cress)).